Consider the following 340-residue polypeptide: MGELMAFLLPLIIVLMVKHSNSRTHSLRYFRLGVSDPIRGVPEFISVGYVDSHPITTYDSVTQQKEPRAPWMAENLAPDHWERYTQLLRGWQQMFKVELKRLQRHYNHSGSHTYQRMIGCELLEDGSTTGFLQYAYDGQDFLIFNKDTLSWLAVDNVAHTIKRAWEANQHELQYQKNWLEEECIAWLKRFLEYGKDTLQRTEPPLVRVNRKETFPGVTTLFCKAHGFYPPEIYMTWMKNGEEIVQEMDYGDILPSGDGTYQTWASFELDPQSSNLYSCHVEHCGVHMVLQVPQESEAIPLVMKAVSGSIVFVIVLTGVGVLVWRRRPREQNGAVYLPTPD.

Positions 1 to 22 (MGELMAFLLPLIIVLMVKHSNS) are cleaved as a signal peptide. An alpha-1 region spans residues 23–109 (RTHSLRYFRL…KRLQRHYNHS (87 aa)). Residues 23-201 (RTHSLRYFRL…EYGKDTLQRT (179 aa)) are antigen-binding cleft. Over 23 to 302 (RTHSLRYFRL…QESEAIPLVM (280 aa)) the chain is Extracellular. Tyrosine 29 and arginine 31 together coordinate 8-(9H-purin-6-yl)-2-oxa-8-azabicyclo[3.3.1]nona-3,6-diene-4,6-dicarbaldehyde. 5-(2-oxoethylideneamino)-6-(D-ribitylamino)uracil-binding residues include arginine 31, serine 46, and lysine 65. 3 residues coordinate 5-(2-oxopropylideneamino)-6-(D-ribitylamino)uracil: arginine 31, serine 46, and lysine 65. The 7-hydroxy-6-methyl-8-(1-D-ribityl)lumazine site is built by arginine 31, serine 46, and lysine 65. 8-(9H-purin-6-yl)-2-oxa-8-azabicyclo[3.3.1]nona-3,6-diene-4,6-dicarbaldehyde contacts are provided by lysine 65 and histidine 80. Lysine 65 is a binding site for 2-amino-4-oxopteridine-6-carbaldehyde. A pyridoxal-binding site is contributed by lysine 65. Residue asparagine 107 is glycosylated (N-linked (GlcNAc...) asparagine). Residues 110–201 (GSHTYQRMIG…EYGKDTLQRT (92 aa)) form an alpha-2 region. Arginine 116 is an 8-(9H-purin-6-yl)-2-oxa-8-azabicyclo[3.3.1]nona-3,6-diene-4,6-dicarbaldehyde binding site. Residues arginine 116, tyrosine 174, and glutamine 175 each coordinate 5-(2-oxoethylideneamino)-6-(D-ribitylamino)uracil. 3 residues coordinate 5-(2-oxopropylideneamino)-6-(D-ribitylamino)uracil: arginine 116, tyrosine 174, and glutamine 175. Residues arginine 116, tyrosine 174, and glutamine 175 each coordinate 7-hydroxy-6-methyl-8-(1-D-ribityl)lumazine. Intrachain disulfides connect cysteine 120-cysteine 183 and cysteine 222-cysteine 278. The tract at residues 202 to 293 (EPPLVRVNRK…GVHMVLQVPQ (92 aa)) is alpha-3. An Ig-like C1-type domain is found at 203 to 282 (PPLVRVNRKE…SNLYSCHVEH (80 aa)). A connecting peptide region spans residues 294-302 (ESEAIPLVM). Residues 303–323 (KAVSGSIVFVIVLTGVGVLVW) traverse the membrane as a helical segment. The Cytoplasmic portion of the chain corresponds to 324–340 (RRRPREQNGAVYLPTPD).

It belongs to the MHC class I family. Heterotrimer that consists of MR1, B2M and metabolite antigen. Major classes of metabolite ligands presented by MR1 include riboflavin-related antigens, pyrimidines and ribityl lumazines, nucleobase adducts and folate derivatives. Forms reversible covalent Schiff base complexes with microbial pyrimidine-based metabolite, which serves as a molecular switch triggering complete folding, stable association with B2M and translocation of the ternary complex from endoplasmic reticulum to the plasma membrane. Alternatively, forms non-Schiff base complexes with ribityl lumazines. On antigen-presenting cells, the ternary complex interacts with TCR on MR1-restricted T cells. Interacts with TAPBP and TAPBPL chaperones in the endoplasmic reticulum. TAPBP associated or not with MHC class I peptide loading complex binds ligand-free MR1 or MR1-B2M complex, providing for stable MR1 pools ready for metabolite antigen processing. TAPBPL interacts with MR1 in a ligand-independent way; this interaction may stabilize MR1 pool and facilitate ligand loading and dissociation. Structurally, MR1-B2M heterodimer adopts a topology similar to classical MHC class I molecules, with alpha-1 and alpha-2 domains of MR1 forming the antigen-binding cleft composed of two alpha-helices resting on a floor of 7-stranded anti-parallel beta-pleated sheet. MR1-B2M heterodimer (via alpha-helices) interacts with TCR (via CDR domains). Post-translationally, N-glycosylated.

It is found in the cell membrane. The protein resides in the endoplasmic reticulum membrane. It localises to the golgi apparatus membrane. Its subcellular location is the early endosome membrane. The protein localises to the late endosome membrane. Its function is as follows. Antigen-presenting molecule specialized in displaying microbial pyrimidine-based metabolites to alpha-beta T cell receptors (TCR) on innate-type mucosal-associated invariant T (MAIT) cells. In complex with B2M preferentially presents riboflavin-derived metabolites to semi-invariant TCRs on MAIT cells, guiding immune surveillance of the microbial metabolome at mucosal epithelial barriers. Signature pyrimidine-based microbial antigens are generated via non-enzymatic condensation of metabolite intermediates of the riboflavin pathway with by-products arising from other metabolic pathways such as glycolysis. Typical potent antigenic metabolites are 5-(2-oxoethylideneamino)-6-D-ribitylaminouracil (5-OE-RU) and 5-(2-oxopropylideneamino)-6-D-ribitylaminouracil (5-OP-RU), products of condensation of 5-amino-6-D-ribityaminouracil (5-A-RU) with glyoxal or methylglyoxal by-products, respectively. May present microbial antigens to various MAIT cell subsets, providing for unique recognition of diverse microbes, including pathogens that do not synthesize riboflavin. Upon antigen recognition, elicits rapid innate-type MAIT cell activation to eliminate pathogenic microbes by directly killing infected cells. During T cell development, drives thymic selection and post-thymic terminal differentiation of MAIT cells in a process dependent on commensal microflora. Acts as an immune sensor of cancer cell metabolome. May present a tumor-specific or -associated metabolite essential for cancer cell survival to a pan-cancer TCR on a non-MAIT CD8-positive T cell clone, triggering T cell-mediated killing of a wide range of cancer cell types. May present tumor-enriched pyridoxal and pyridoxal 5'-phosphate antigens, enabling preferential recognition of cancer cells. Presents nucleobase carbonyl adducts generated during oxidative stress. Captures M3Ade, a nucleobase adduct composed of one adenine modified by a malondialdehyde trimer, for recognition by MR1-restricted T cell clones expressing a polyclonal TCR repertoire. This chain is Major histocompatibility complex class I-related gene protein, found in Pongo pygmaeus (Bornean orangutan).